We begin with the raw amino-acid sequence, 305 residues long: Glycine--tRNA ligase alpha subunit (305 aa).

This sequence belongs to the class-II aminoacyl-tRNA synthetase family. In terms of assembly, tetramer of two alpha and two beta subunits.

It localises to the cytoplasm. The enzyme catalyses tRNA(Gly) + glycine + ATP = glycyl-tRNA(Gly) + AMP + diphosphate. The polypeptide is Glycine--tRNA ligase alpha subunit (Streptococcus thermophilus (strain CNRZ 1066)).